The primary structure comprises 106 residues: MSDVLDRLAELLEQRKSADPQSSYVAKLYAKGTDAILKKIGEEATEAIIAAKDGDAEQIVYETADLWFHSLVMLANAGLGPQDVLRELARREGLSGLEEKASRPVE.

This sequence belongs to the PRA-PH family.

It localises to the cytoplasm. It carries out the reaction 1-(5-phospho-beta-D-ribosyl)-ATP + H2O = 1-(5-phospho-beta-D-ribosyl)-5'-AMP + diphosphate + H(+). It participates in amino-acid biosynthesis; L-histidine biosynthesis; L-histidine from 5-phospho-alpha-D-ribose 1-diphosphate: step 2/9. The protein is Phosphoribosyl-ATP pyrophosphatase of Methylobacillus flagellatus (strain ATCC 51484 / DSM 6875 / VKM B-1610 / KT).